The chain runs to 420 residues: ATP phosphoribosyltransferase regulatory subunit (420 aa).

This sequence belongs to the class-II aminoacyl-tRNA synthetase family. HisZ subfamily. Heteromultimer composed of HisG and HisZ subunits.

Its subcellular location is the cytoplasm. The protein operates within amino-acid biosynthesis; L-histidine biosynthesis; L-histidine from 5-phospho-alpha-D-ribose 1-diphosphate: step 1/9. In terms of biological role, required for the first step of histidine biosynthesis. May allow the feedback regulation of ATP phosphoribosyltransferase activity by histidine. This Bacillus cereus (strain ATCC 14579 / DSM 31 / CCUG 7414 / JCM 2152 / NBRC 15305 / NCIMB 9373 / NCTC 2599 / NRRL B-3711) protein is ATP phosphoribosyltransferase regulatory subunit.